The following is a 297-amino-acid chain: MNLGTLVSETRNPQTMDLDALPTPELVKRFNEQDTLVAEAVKATLPDVARAVDAAAAALKSGGRIIYMGAGTSGRLGVLDASECPPTFGVPHGLVVGLIAGGPGALLKAVEGAEDSQQAGEDDLVALNLQEQDLVVGLAASGRTPYVIGGLRYARQSGCTTVAVSCNPDSPIAREANIAISPVVGPEALTGSTRLKSGTAQKMVLNMISTGAMVKFGKVYQNLMVDMKATNVKLVDRACRMVVEATGIGREEAETLLKQTDFEVKPAILMALTGLDAAAAREKLAAHQGFLRAALEH.

The region spanning 55 to 218 (AAAALKSGGR…STGAMVKFGK (164 aa)) is the SIS domain. Catalysis depends on Glu83, which acts as the Proton donor. Glu114 is a catalytic residue.

This sequence belongs to the GCKR-like family. MurNAc-6-P etherase subfamily. In terms of assembly, homodimer.

The enzyme catalyses N-acetyl-D-muramate 6-phosphate + H2O = N-acetyl-D-glucosamine 6-phosphate + (R)-lactate. It functions in the pathway amino-sugar metabolism; 1,6-anhydro-N-acetylmuramate degradation. The protein operates within amino-sugar metabolism; N-acetylmuramate degradation. It participates in cell wall biogenesis; peptidoglycan recycling. Functionally, specifically catalyzes the cleavage of the D-lactyl ether substituent of MurNAc 6-phosphate, producing GlcNAc 6-phosphate and D-lactate. Together with AnmK, is also required for the utilization of anhydro-N-acetylmuramic acid (anhMurNAc) either imported from the medium or derived from its own cell wall murein, and thus plays a role in cell wall recycling. This chain is N-acetylmuramic acid 6-phosphate etherase, found in Salmonella schwarzengrund (strain CVM19633).